Here is a 345-residue protein sequence, read N- to C-terminus: Uroporphyrinogen decarboxylase (345 aa).

Substrate contacts are provided by residues 26–30 (RQAGR), D76, Y151, S205, and H321.

The protein belongs to the uroporphyrinogen decarboxylase family. Homodimer.

Its subcellular location is the cytoplasm. The enzyme catalyses uroporphyrinogen III + 4 H(+) = coproporphyrinogen III + 4 CO2. It functions in the pathway porphyrin-containing compound metabolism; protoporphyrin-IX biosynthesis; coproporphyrinogen-III from 5-aminolevulinate: step 4/4. Its function is as follows. Catalyzes the decarboxylation of four acetate groups of uroporphyrinogen-III to yield coproporphyrinogen-III. This is Uroporphyrinogen decarboxylase from Phenylobacterium zucineum (strain HLK1).